The sequence spans 139 residues: Large ribosomal subunit protein uL16c (139 aa).

Belongs to the universal ribosomal protein uL16 family. In terms of assembly, part of the 50S ribosomal subunit.

It localises to the plastid. The protein resides in the chloroplast. The protein is Large ribosomal subunit protein uL16c of Cryptomeria japonica (Japanese cedar).